A 648-amino-acid polypeptide reads, in one-letter code: MTPLLELKDIRRSYPAGNEQVEVLKGISLDIYAGEMVAIVGASGSGKSTLMNILGCLDKATSGTYRVAGQDVATLDADALAQLRREHFGFIFQRYHLLSHLTAEQNVEVPAVYAGLERKQRLLRAQELLQRLGLEDRTEYYPAQLSGGQQQRVSIARALMNGGQVILADEPTGALDSHSGEEVMAILHQLRDRGHTVIIVTHDPQVAAQAERVIEIRDGEIVRNPPAIEKVNVAGGTEPVVNTVSGWRQFVSGFNEALTMAWRALAANKMRTLLTMLGIIIGIASVVSIVVVGDAAKQMVLADIRSIGTNTIDVYPGKDFGDDDPQYQQALKYDDLIAIQKQPWVASATPAVSQNLRLRYNNVDVAASANGVSGDYFNVYGMTFSEGNTFNQEQLNGRAQVVVLDSNTRRQLFPHKADVVGEVILVGNMPARVIGVAEEKQSMFGSSKVLRVWLPYSTMSGRVMGQSWLNSITVRVKEGFDSAEAEQQLTRLLSLRHGKKDFFTWNMDGVLKTVEKTTRTLQLFLTLVAVISLVVGGIGVMNIMLVSVTERTREIGIRMAVGARASDVLQQFLIEAVLVCLVGGALGITLSLLIAFTLQLFLPGWEIGFSPLALLLAFLCSTATGILFGWLPARNAARLDPVDALARE.

The region spanning 5–243 is the ABC transporter domain; it reads LELKDIRRSY…AGGTEPVVNT (239 aa). Residue 41–48 coordinates ATP; the sequence is GASGSGKS. Helical transmembrane passes span 273 to 293, 523 to 543, 576 to 596, and 600 to 620; these read LLTM…VVVG, LFLT…VMNI, AVLV…LIAF, and LFLP…AFLC.

It belongs to the ABC transporter superfamily. Macrolide exporter (TC 3.A.1.122) family. In terms of assembly, homodimer. Part of the tripartite efflux system MacAB-TolC, which is composed of an inner membrane transporter, MacB, a periplasmic membrane fusion protein, MacA, and an outer membrane component, TolC. The complex forms a large protein conduit and can translocate molecules across both the inner and outer membranes. Interacts with MacA.

Its subcellular location is the cell inner membrane. Its function is as follows. Part of the tripartite efflux system MacAB-TolC. MacB is a non-canonical ABC transporter that contains transmembrane domains (TMD), which form a pore in the inner membrane, and an ATP-binding domain (NBD), which is responsible for energy generation. Confers resistance against macrolides. The chain is Macrolide export ATP-binding/permease protein MacB from Shigella sonnei (strain Ss046).